The sequence spans 362 residues: Peptide chain release factor 1 (362 aa).

Q237 carries the N5-methylglutamine modification.

This sequence belongs to the prokaryotic/mitochondrial release factor family. Methylated by PrmC. Methylation increases the termination efficiency of RF1.

It is found in the cytoplasm. Peptide chain release factor 1 directs the termination of translation in response to the peptide chain termination codons UAG and UAA. The chain is Peptide chain release factor 1 from Aliivibrio fischeri (strain ATCC 700601 / ES114) (Vibrio fischeri).